The following is a 765-amino-acid chain: Polyadenylate-binding protein, cytoplasmic and nuclear (765 aa).

Low complexity predominate over residues 1-37 (MSADASTTPAADSNVTSTPETSTTPAAPAPEVTAVES). The interval 1–49 (MSADASTTPAADSNVTSTPETSTTPAAPAPEVTAVESTTAPNASQPHSA) is disordered. Residues 38–48 (TTAPNASQPHS) show a composition bias toward polar residues. RRM domains follow at residues 49-127 (ASLY…WSQR), 137-214 (GNVF…HHIS), 230-307 (TNVY…RAQK), and 333-470 (VNLY…LAQR). Disordered regions lie at residues 364 to 427 (VMRD…ADKK) and 619 to 657 (PGYG…PEEA). A compositionally biased stretch (basic and acidic residues) spans 377-427 (ESDKEKENKEATKENEKESSEAEKAEKTEEKPADSGDEKKEDKESKKADKK). Over residues 628 to 637 (VPVQQGQMRP) the composition is skewed to low complexity. In terms of domain architecture, PABC spans 659-736 (AGGLTAQALS…ALNVYDEYMK (78 aa)). The interval 737 to 765 (NKGGESEATGEAAKPKEAAKETSTEENKS) is disordered. A compositionally biased stretch (basic and acidic residues) spans 749–765 (AKPKEAAKETSTEENKS).

The protein belongs to the polyadenylate-binding protein type-1 family.

The protein localises to the cytoplasm. The protein resides in the nucleus. In terms of biological role, binds the poly(A) tail of mRNA. Appears to be an important mediator of the multiple roles of the poly(A) tail in mRNA biogenesis, stability and translation. In the nucleus, involved in both mRNA cleavage and polyadenylation. Is also required for efficient mRNA export to the cytoplasm. Acts in concert with a poly(A)-specific nuclease (PAN) to affect poly(A) tail shortening, which may occur concomitantly with either nucleocytoplasmic mRNA transport or translational initiation. In the cytoplasm, stimulates translation initiation and regulates mRNA decay through translation termination-coupled poly(A) shortening, probably mediated by PAN. This is Polyadenylate-binding protein, cytoplasmic and nuclear (pab1) from Aspergillus oryzae (strain ATCC 42149 / RIB 40) (Yellow koji mold).